A 187-amino-acid chain; its full sequence is Protein McbG (187 aa).

This sequence belongs to the pentapeptide repeat protein family.

Together with proteins McbE and McbF this protein causes immunity to the peptide antibiotic microcin B17 (MccB17), which inhibits DNA replication in Enterobacteriaceae by induction of the SOS repair system. McbG alone can provide some protection. This Escherichia coli protein is Protein McbG (mcbG).